A 1173-amino-acid polypeptide reads, in one-letter code: DNA-directed RNA polymerase subunit beta (1173 aa).

A disordered region spans residues 1–23 (MEGSLLVASSTSNNETANTASTD). Residues 8 to 22 (ASSTSNNETANTAST) are compositionally biased toward low complexity.

The protein belongs to the RNA polymerase beta chain family. The RNAP catalytic core consists of 2 alpha, 1 beta, 1 beta' and 1 omega subunit. When a sigma factor is associated with the core the holoenzyme is formed, which can initiate transcription.

The catalysed reaction is RNA(n) + a ribonucleoside 5'-triphosphate = RNA(n+1) + diphosphate. Its function is as follows. DNA-dependent RNA polymerase catalyzes the transcription of DNA into RNA using the four ribonucleoside triphosphates as substrates. This Paenarthrobacter aurescens (strain TC1) protein is DNA-directed RNA polymerase subunit beta.